A 631-amino-acid chain; its full sequence is Fatty acid ABC transporter ATP-binding/permease protein (631 aa).

Low complexity predominate over residues 1–11 (MTAPPGARPRA). Residues 1 to 20 (MTAPPGARPRAASPPPNMRS) are disordered. 3 helical membrane-spanning segments follow: residues 42–62 (IAVI…PRIL), 123–143 (LALA…QARL), and 205–225 (ILTM…LALI). Residues 42-365 (IAVITLGIAG…LAGMYNALQS (324 aa)) form the ABC transmembrane type-1 domain. Positions 397–631 (VEFEHVNFAY…RGVYYQMTRA (235 aa)) constitute an ABC transporter domain. An ATP-binding site is contributed by 430 to 437 (GPTGAGKT).

Belongs to the ABC transporter superfamily. Lipid exporter (TC 3.A.1.106) family.

The protein resides in the cell inner membrane. Its function is as follows. ABC transporter involved in fatty acid import. Transmembrane domains (TMD) form a pore in the membrane and the ATP-binding domain (NBD) is responsible for energy generation. The protein is Fatty acid ABC transporter ATP-binding/permease protein of Mycobacterium bovis (strain ATCC BAA-935 / AF2122/97).